The primary structure comprises 228 residues: Triosephosphate isomerase (228 aa).

Position 12–14 (12–14) interacts with substrate; the sequence is NFK. H96 acts as the Electrophile in catalysis. E144 serves as the catalytic Proton acceptor. Substrate contacts are provided by residues I149, G184, and 205–206; that span reads AS.

This sequence belongs to the triosephosphate isomerase family. Homotetramer; dimer of dimers.

Its subcellular location is the cytoplasm. It carries out the reaction D-glyceraldehyde 3-phosphate = dihydroxyacetone phosphate. The protein operates within carbohydrate biosynthesis; gluconeogenesis. It functions in the pathway carbohydrate degradation; glycolysis; D-glyceraldehyde 3-phosphate from glycerone phosphate: step 1/1. Its function is as follows. Involved in the gluconeogenesis. Catalyzes stereospecifically the conversion of dihydroxyacetone phosphate (DHAP) to D-glyceraldehyde-3-phosphate (G3P). This Pyrococcus furiosus (strain ATCC 43587 / DSM 3638 / JCM 8422 / Vc1) protein is Triosephosphate isomerase.